We begin with the raw amino-acid sequence, 63 residues long: Beta-defensin 4 (63 aa).

A signal peptide spans 1-22 (MRIHYLLFTFLLVLLSPLAAFT). Gln23 carries the pyrrolidone carboxylic acid modification. 3 cysteine pairs are disulfide-bonded: Cys31-Cys59, Cys38-Cys52, and Cys42-Cys60.

This sequence belongs to the beta-defensin family. Tongue, esophagus and trachea.

Its subcellular location is the secreted. In terms of biological role, exhibits antimicrobial activity against Gram-negative bacteria and Gram-positive bacteria. May act as a ligand for C-C chemokine receptor CCR6. Can bind to mouse (but not human) CCR6 and induce chemotactic activity of CCR6-expressing cells. This chain is Beta-defensin 4 (Defb4), found in Mus musculus (Mouse).